A 351-amino-acid chain; its full sequence is Photosystem II D2 protein (351 aa).

A helical membrane pass occupies residues cysteine 39–threonine 59. Histidine 116 contributes to the chlorophyll a binding site. The helical transmembrane segment at glycine 123 to proline 139 threads the bilayer. Positions 128 and 141 each coordinate pheophytin a. Residues valine 151–serine 164 traverse the membrane as a helical segment. Residue histidine 196 coordinates chlorophyll a. A helical transmembrane segment spans residues glycine 206–aspartate 226. The a plastoquinone site is built by histidine 213 and phenylalanine 260. Histidine 213 is a Fe cation binding site. Histidine 267 lines the Fe cation pocket. The helical transmembrane segment at glycine 277–arginine 293 threads the bilayer.

Belongs to the reaction center PufL/M/PsbA/D family. PSII is composed of 1 copy each of membrane proteins PsbA, PsbB, PsbC, PsbD, PsbE, PsbF, PsbH, PsbI, PsbJ, PsbK, PsbL, PsbM, PsbT, PsbX, PsbY, PsbZ, Psb30/Ycf12, peripheral proteins PsbO, CyanoQ (PsbQ), PsbU, PsbV and a large number of cofactors. It forms dimeric complexes. It depends on The D1/D2 heterodimer binds P680, chlorophylls that are the primary electron donor of PSII, and subsequent electron acceptors. It shares a non-heme iron and each subunit binds pheophytin, quinone, additional chlorophylls, carotenoids and lipids. There is also a Cl(-1) ion associated with D1 and D2, which is required for oxygen evolution. The PSII complex binds additional chlorophylls, carotenoids and specific lipids. as a cofactor.

The protein localises to the cellular thylakoid membrane. The enzyme catalyses 2 a plastoquinone + 4 hnu + 2 H2O = 2 a plastoquinol + O2. Photosystem II (PSII) is a light-driven water:plastoquinone oxidoreductase that uses light energy to abstract electrons from H(2)O, generating O(2) and a proton gradient subsequently used for ATP formation. It consists of a core antenna complex that captures photons, and an electron transfer chain that converts photonic excitation into a charge separation. The D1/D2 (PsbA/PsbD) reaction center heterodimer binds P680, the primary electron donor of PSII as well as several subsequent electron acceptors. D2 is needed for assembly of a stable PSII complex. The chain is Photosystem II D2 protein from Nostoc punctiforme (strain ATCC 29133 / PCC 73102).